We begin with the raw amino-acid sequence, 511 residues long: Synaptotagmin-6 (511 aa).

The Vesicular segment spans residues methionine 1–serine 59. Residues cysteine 12–arginine 38 are cysteine motif. A helical transmembrane segment spans residues leucine 60–phenylalanine 80. At tryptophan 81–leucine 511 the chain is on the cytoplasmic side. Disordered stretches follow at residues glutamate 92–leucine 119 and threonine 157–glutamine 182. Residues serine 94 to serine 103 are compositionally biased toward low complexity. Composition is skewed to polar residues over residues glutamate 104–glycine 113 and glutamine 160–histidine 172. Serine 217 carries the phosphoserine modification. 2 consecutive C2 domains span residues serine 230 to lysine 351 and aspartate 362 to histidine 495. Aspartate 261, aspartate 267, aspartate 319, phenylalanine 320, aspartate 321, serine 324, aspartate 327, aspartate 393, aspartate 399, aspartate 453, and aspartate 455 together coordinate Ca(2+). Positions methionine 483–leucine 511 are necessary for cell membrane association (isoform 2).

The protein belongs to the synaptotagmin family. Isoform 1: Homodimer; disulfide-linked via the cysteine motif. Isoform 1: Can also form heterodimers with SYT3, SYT7, SYT9 and SYT10. Isoform 1: Interacts with STX1A, STX1B and STX2; the interaction is Ca(2+)-dependent. Isoform 2: Is not able to form homodimer and heterodimers. The cofactor is Ca(2+). Isoform 1 is expressed in the olfactory bulb. Isoform 2 is expressed in the brain (at protein level).

The protein localises to the cytoplasmic vesicle. It localises to the secretory vesicle. The protein resides in the synaptic vesicle membrane. Its subcellular location is the membrane. It is found in the cytoplasm. The protein localises to the cytosol. It localises to the cell membrane. Its function is as follows. May be involved in Ca(2+)-dependent exocytosis of secretory vesicles through Ca(2+) and phospholipid binding to the C2 domain or may serve as Ca(2+) sensors in the process of vesicular trafficking and exocytosis. May mediate Ca(2+)-regulation of exocytosis in acrosomal reaction in sperm. The polypeptide is Synaptotagmin-6 (Syt6) (Mus musculus (Mouse)).